The chain runs to 507 residues: Pre-glycoprotein polyprotein GP complex (507 aa).

The N-myristoyl glycine; by host moiety is linked to residue Gly2. The Extracellular portion of the chain corresponds to 2-17 (GQVVTFLQSLPEVINE). Residues 18-33 (AINIALIAISIICILK) form a helical membrane-spanning segment. Over 34-58 (GLVNFWKCGVVQLAIFLCLAGRKCD) the chain is Cytoplasmic. Cys57 lines the Zn(2+) pocket. Topologically, residues 59–445 (GLMIDRRHEL…QGKTPIALTD (387 aa)) are extracellular. Intrachain disulfides connect Cys86–Cys247, Cys292–Cys305, Cys314–Cys323, and Cys377–Cys398. 4 N-linked (GlcNAc...) asparagine; by host glycosylation sites follow: Asn89, Asn111, Asn179, and Asn240. N-linked (GlcNAc...) asparagine; by host glycosylation is found at Asn378, Asn386, Asn403, and Asn408. The chain crosses the membrane as a helical span at residues 446-466 (ICFWSLVFFTSTVFLQLVGIP). At 467–507 (THRHLVGEGCPKPHRITSNSLCACGYYKIPKRPTRWVRKGK) the chain is on the cytoplasmic side. Residues His468, His470, Cys476, His480, Cys488, and Cys490 each coordinate Zn(2+).

This sequence belongs to the arenaviridae GPC protein family. In terms of assembly, interacts with glycoprotein G2. Part of the GP complex (GP-C) together with glycoprotein G1 and glycoprotein G2. The GP-complex interacts with protein Z, which interacts with ribonucleocapsid; these interactions may induce virion budding. Homotrimer; disulfide-linked. In pre-fusion state, G1 homotrimers bind G2 homotrimers via ionic interactions. Part of the GP complex (GP-C) together with glycoprotein G2 and the stable signal peptide. The GP-complex interacts with protein Z, which interacts with ribonucleocapsid; these interactions may induce virion budding. As to quaternary structure, homotrimer. Interacts with the stable signal peptide. In pre-fusion state, G2 homotrimers bind G1 homotrimers via ionic interactions. Part of the GP complex (GP-C) together with glycoprotein G1 and the stable signal peptide. Acidification in the endosome triggers rearrangements, which ultimately leads to a 6 helix bundle formed by the two heptad repeat domains (HR1 and HR2) in post-fusion state. The GP-complex interacts with protein Z, which interacts with ribonucleocapsid; these interactions may induce virion budding. In terms of processing, specific enzymatic cleavages in vivo yield mature proteins. GP-C polyprotein is cleaved in the endoplasmic reticulum by the host protease MBTPS1. Only cleaved glycoprotein is incorporated into virions. Post-translationally, the SSP remains stably associated with the GP complex following cleavage by signal peptidase and plays crucial roles in the trafficking of GP through the secretory pathway. Myristoylation is necessary for GP2-mediated fusion activity.

The protein localises to the virion membrane. The protein resides in the host endoplasmic reticulum membrane. Its subcellular location is the host Golgi apparatus membrane. It localises to the host cell membrane. Functionally, functions as a cleaved signal peptide that is retained as the third component of the GP complex (GP-C). Helps to stabilize the spike complex in its native conformation. The SSP is required for efficient glycoprotein expression, post-translational maturation cleavage of G1 and G2, glycoprotein transport to the cell surface plasma membrane, formation of infectious virus particles, and acid pH-dependent glycoprotein-mediated cell fusion. Forms the virion spikes together with glycoprotein G2. The glycoprotein spike trimers are connected to the underlying matrix. Interacts with the host receptor leading to virus endocytosis. In terms of biological role, forms the virion spikes together with glycoprotein G1. The glycoprotein spike trimers are connected to the underlying matrix. Class I viral fusion protein that directs fusion of viral and host endosomal membranes, leading to delivery of the nucleocapsid into the cytoplasm. Membrane fusion is mediated by irreversible conformational changes induced by acidification. The polypeptide is Pre-glycoprotein polyprotein GP complex (Allpahuayo mammarenavirus (isolate Rat/Peru/CLHP-2472/1997) (ALLV)).